A 528-amino-acid polypeptide reads, in one-letter code: Equilibrative nucleoside transporter 4 (528 aa).

Residues 1–68 (MGSIGSQRLK…EEPVPDDRYH (68 aa)) lie on the Extracellular side of the membrane. The helical transmembrane segment at 69-89 (AIYFAMLLAGVGFLLPYNSFI) threads the bilayer. Over 90-101 (TDVDYLHHKYPG) the chain is Cytoplasmic. The chain crosses the membrane as a helical span at residues 102–122 (TSIVFDMSLTYILVALAAVLL). Residues 123 to 139 (NNVVVERLNLHTRITTG) are Extracellular-facing. A helical transmembrane segment spans residues 140-160 (YLLALGPLLFISICDVWLQLF). The Cytoplasmic portion of the chain corresponds to 161 to 166 (SHDQAY). The helical transmembrane segment at 167–187 (AINLAAVGTVAFGCTVQQSSF) threads the bilayer. The Extracellular segment spans residues 188–231 (YGYTGLLPKRYTQGVMTGESTAGVMISLSRILTKLLLPDERAST). Residues 232 to 252 (IIFFLVSAGLELLCFLLHLLV) form a helical membrane-spanning segment. At 253-346 (RRSRFVLYYT…LLLHRYVVAR (94 aa)) the chain is on the cytoplasmic side. A helical transmembrane segment spans residues 347–367 (VIWADMLSIAVTYFITLCLFP). Residues 368–376 (GLESEIRHC) are Extracellular-facing. The helical transmembrane segment at 377 to 397 (VLGEWLPILVMAVFNLSDFVG) threads the bilayer. The Cytoplasmic portion of the chain corresponds to 398 to 411 (KILAALPVEWRGTH). The chain crosses the membrane as a helical span at residues 412 to 432 (LLACSCLRVVFIPLFILCVYP). The Extracellular segment spans residues 433 to 445 (SGMPALRHPAWPC). Residues 446 to 466 (VFSLLMGISNGYFGSVPMILA) form a helical membrane-spanning segment. The Cytoplasmic portion of the chain corresponds to 467–481 (AGKVSPKQRELAGNT). A helical membrane pass occupies residues 482–504 (MTVSYMSGLTLGSAVAYCTYSLT). Over 505–528 (RDAHGSCFQTATAAAANDSIPVGP) the chain is Extracellular. Residue Asn-521 is glycosylated (N-linked (GlcNAc...) asparagine).

It belongs to the SLC29A/ENT transporter (TC 2.A.57) family. Post-translationally, N-glycosylated. In terms of tissue distribution, expressed in heart. Expressed in choroid plexus.

Its subcellular location is the cell membrane. The protein resides in the apical cell membrane. It catalyses the reaction serotonin(out) = serotonin(in). The enzyme catalyses dopamine(out) = dopamine(in). It carries out the reaction (R)-noradrenaline(out) = (R)-noradrenaline(in). The catalysed reaction is (R)-adrenaline(out) = (R)-adrenaline(in). It catalyses the reaction histamine(out) = histamine(in). The enzyme catalyses tyramine(in) = tyramine(out). It carries out the reaction guanidine(out) = guanidine(in). The catalysed reaction is adenine(out) = adenine(in). It catalyses the reaction adenosine(in) = adenosine(out). Its activity is regulated as follows. Activated at acidic pH. Functionally, electrogenic voltage-dependent transporter that mediates the transport of a variety of endogenous bioactive amines, cationic xenobiotics and drugs. Utilizes the physiologic inside-negative membrane potential as a driving force to facilitate cellular uptake of organic cations. Functions as a Na(+)- and Cl(-)-independent bidirectional transporter. Substrate transport is pH-dependent and enhanced under acidic condition, which is most likely the result of allosteric changes in the transporter structure. Implicated in monoamine neurotransmitters uptake such as serotonin, dopamine, adrenaline/epinephrine, noradrenaline/norepinephrine, histamine and tyramine, thereby supporting a role in homeostatic regulation of aminergic neurotransmission in the central nervous system. Also responsible for the uptake of bioactive amines and drugs through the blood-cerebrospinal fluid (CSF) barrier, from the CSF into choroid plexus epithelial cells, thereby playing a significant role in the clearance of cationic neurotoxins, xenobiotics and metabolic waste in the brain. Involved in bidirectional transport of the purine nucleoside adenosine and plays a role in the regulation of extracellular adenosine concentrations in cardiac tissues, in particular during ischemia. May be involved in organic cation uptake from the tubular lumen into renal tubular cells, thereby contributing to organic cation reabsorption in the kidney. Also transports adenine and guanidine. The protein is Equilibrative nucleoside transporter 4 of Mus musculus (Mouse).